We begin with the raw amino-acid sequence, 800 residues long: Mitochondrial intermediate peptidase (800 aa).

Residues 1–23 (MAGHMLMPLRRRPWTCRACLQRL) constitute a mitochondrion transit peptide. Residues 27–41 (RRSLETAASPSSQSD) show a composition bias toward polar residues. The disordered stretch occupies residues 27-59 (RRSLETAASPSSQSDVYDYAPTNHSTQKKSNDE). Histidine 563 contacts Zn(2+). The active site involves glutamate 564. Positions 567 and 570 each coordinate Zn(2+).

Belongs to the peptidase M3 family. Zn(2+) is required as a cofactor.

The protein localises to the mitochondrion matrix. The enzyme catalyses Release of an N-terminal octapeptide as second stage of processing of some proteins imported into the mitochondrion.. Cleaves proteins, imported into the mitochondrion, to their mature size. While most mitochondrial precursor proteins are processed to the mature form in one step by mitochondrial processing peptidase (MPP), the sequential cleavage by MIP of an octapeptide after initial processing by MPP is a required step for a subgroup of nuclear-encoded precursor proteins destined for the matrix or the inner membrane. The sequence is that of Mitochondrial intermediate peptidase (oct1) from Aspergillus oryzae (strain ATCC 42149 / RIB 40) (Yellow koji mold).